A 1583-amino-acid chain; its full sequence is Protein mesh (1583 aa).

The first 21 residues, methionine 1–glycine 21, serve as a signal peptide directing secretion. Residues glutamine 22–threonine 1182 are Extracellular-facing. The NIDO domain occupies glycine 260–asparagine 415. Positions glycine 647–arginine 798 constitute an AMOP domain. One can recognise a VWFD domain in the interval glycine 811–arginine 1019. Residues isoleucine 1110–arginine 1170 enclose the Sushi domain. 2 cysteine pairs are disulfide-bonded: cysteine 1112/cysteine 1152 and cysteine 1138/cysteine 1168. A helical membrane pass occupies residues tryptophan 1183–tryptophan 1203. The Cytoplasmic portion of the chain corresponds to cysteine 1204–alanine 1472. The span at leucine 1232 to proline 1250 shows a compositional bias: polar residues. The tract at residues leucine 1232–valine 1448 is disordered. The span at glycine 1291–lysine 1300 shows a compositional bias: basic and acidic residues. Positions proline 1405 to glutamate 1416 are enriched in polar residues. The chain crosses the membrane as a helical span at residues threonine 1473–tryptophan 1493. At arginine 1494–asparagine 1583 the chain is on the extracellular side. Positions aspartate 1521–threonine 1539 are enriched in basic and acidic residues. Residues aspartate 1521–asparagine 1583 form a disordered region.

In fifth instar larvae, expressed in midgut epithelial cells (at protein level).

The protein localises to the membrane. It localises to the cell junction. Its subcellular location is the septate junction. The protein resides in the lateral cell membrane. In terms of biological role, may be required for the proper organization of smooth septate junctions and for the barrier function of the midgut epithelium. The chain is Protein mesh from Bombyx mori (Silk moth).